The sequence spans 25 residues: Oxyopinin-3c (25 aa).

As to expression, expressed by the venom gland.

The protein localises to the secreted. Its function is as follows. May have cytolytic and antimicrobial activity. The chain is Oxyopinin-3c from Oxyopes takobius (Lynx spider).